A 113-amino-acid chain; its full sequence is Large ribosomal subunit protein bL19 (113 aa).

The protein belongs to the bacterial ribosomal protein bL19 family.

This protein is located at the 30S-50S ribosomal subunit interface and may play a role in the structure and function of the aminoacyl-tRNA binding site. This is Large ribosomal subunit protein bL19 from Rhodococcus erythropolis (strain PR4 / NBRC 100887).